Here is a 276-residue protein sequence, read N- to C-terminus: Ribosomal RNA small subunit methyltransferase A (276 aa).

Residues asparagine 24, leucine 26, glycine 51, glutamate 72, aspartate 97, and asparagine 118 each contribute to the S-adenosyl-L-methionine site.

This sequence belongs to the class I-like SAM-binding methyltransferase superfamily. rRNA adenine N(6)-methyltransferase family. RsmA subfamily.

The protein localises to the cytoplasm. It carries out the reaction adenosine(1518)/adenosine(1519) in 16S rRNA + 4 S-adenosyl-L-methionine = N(6)-dimethyladenosine(1518)/N(6)-dimethyladenosine(1519) in 16S rRNA + 4 S-adenosyl-L-homocysteine + 4 H(+). In terms of biological role, specifically dimethylates two adjacent adenosines (A1518 and A1519) in the loop of a conserved hairpin near the 3'-end of 16S rRNA in the 30S particle. May play a critical role in biogenesis of 30S subunits. This Clostridium acetobutylicum (strain ATCC 824 / DSM 792 / JCM 1419 / IAM 19013 / LMG 5710 / NBRC 13948 / NRRL B-527 / VKM B-1787 / 2291 / W) protein is Ribosomal RNA small subunit methyltransferase A.